Here is a 362-residue protein sequence, read N- to C-terminus: 3-dehydroquinate synthase (362 aa).

Residues 70–75 (DGEKYK), 104–108 (GVIGD), 128–129 (TT), Lys141, and Lys150 each bind NAD(+). Zn(2+)-binding residues include Glu183, His246, and His263.

The protein belongs to the sugar phosphate cyclases superfamily. Dehydroquinate synthase family. It depends on Co(2+) as a cofactor. Zn(2+) serves as cofactor. The cofactor is NAD(+).

It localises to the cytoplasm. The enzyme catalyses 7-phospho-2-dehydro-3-deoxy-D-arabino-heptonate = 3-dehydroquinate + phosphate. The protein operates within metabolic intermediate biosynthesis; chorismate biosynthesis; chorismate from D-erythrose 4-phosphate and phosphoenolpyruvate: step 2/7. Functionally, catalyzes the conversion of 3-deoxy-D-arabino-heptulosonate 7-phosphate (DAHP) to dehydroquinate (DHQ). The sequence is that of 3-dehydroquinate synthase from Acinetobacter baylyi (strain ATCC 33305 / BD413 / ADP1).